We begin with the raw amino-acid sequence, 127 residues long: Small ribosomal subunit protein uS13 (127 aa).

Residues 93-127 (RRGMPVRGQRTRTNARTRRGRRGQAIGIKKKATKK) are disordered.

It belongs to the universal ribosomal protein uS13 family. As to quaternary structure, part of the 30S ribosomal subunit. Forms a loose heterodimer with protein S19. Forms two bridges to the 50S subunit in the 70S ribosome.

Its function is as follows. Located at the top of the head of the 30S subunit, it contacts several helices of the 16S rRNA. In the 70S ribosome it contacts the 23S rRNA (bridge B1a) and protein L5 of the 50S subunit (bridge B1b), connecting the 2 subunits; these bridges are implicated in subunit movement. Contacts the tRNAs in the A and P-sites. This is Small ribosomal subunit protein uS13 from Chloroflexus aurantiacus (strain ATCC 29366 / DSM 635 / J-10-fl).